Reading from the N-terminus, the 149-residue chain is Secreted RxLR effector protein 3 (149 aa).

Positions Met-1 to Ala-23 are cleaved as a signal peptide. Positions Arg-38 to Arg-53 match the RxLR-dEER motif.

The protein belongs to the RxLR effector family.

The protein resides in the secreted. The protein localises to the host nucleus. Its subcellular location is the host cytoplasm. In terms of biological role, secreted effector that completely suppresses the host cell death induced by cell death-inducing proteins. The polypeptide is Secreted RxLR effector protein 3 (Plasmopara viticola (Downy mildew of grapevine)).